Consider the following 585-residue polypeptide: A-type ATP synthase subunit A (585 aa).

231-238 (GPFGSGKT) contacts ATP.

This sequence belongs to the ATPase alpha/beta chains family. In terms of assembly, has multiple subunits with at least A(3), B(3), C, D, E, F, H, I and proteolipid K(x).

It is found in the cell membrane. It carries out the reaction ATP + H2O + 4 H(+)(in) = ADP + phosphate + 5 H(+)(out). Component of the A-type ATP synthase that produces ATP from ADP in the presence of a proton gradient across the membrane. The A chain is the catalytic subunit. The sequence is that of A-type ATP synthase subunit A from Desulfurococcus sp. (strain SY).